The sequence spans 789 residues: Ribonucleoside-diphosphate reductase large subunit (789 aa).

Substrate contacts are provided by residues Thr207, 222–223 (SC), Gly253, 435–439 (NLCTE), and 620–624 (PTVSS). A disulfide bridge connects residues Cys223 and Cys452. The Proton acceptor role is filled by Asn435. Cys437 acts as the Cysteine radical intermediate in catalysis. Glu439 functions as the Proton acceptor in the catalytic mechanism.

It belongs to the ribonucleoside diphosphate reductase large chain family. As to quaternary structure, heterotetramer composed of a homodimer of the large subunit (R1) and a homodimer of the small subunit (R2). Larger multisubunit protein complex are also active, composed of (R1)n(R2)n.

It catalyses the reaction a 2'-deoxyribonucleoside 5'-diphosphate + [thioredoxin]-disulfide + H2O = a ribonucleoside 5'-diphosphate + [thioredoxin]-dithiol. Its function is as follows. Ribonucleoside-diphosphate reductase holoenzyme provides the precursors necessary for viral DNA synthesis. Allows virus growth in non-dividing cells, as well as reactivation from latency in infected hosts. Catalyzes the biosynthesis of deoxyribonucleotides from the corresponding ribonucleotides. The polypeptide is Ribonucleoside-diphosphate reductase large subunit (Equus caballus (Horse)).